The sequence spans 246 residues: Probable transcriptional regulatory protein Teth39_1009 (246 aa).

The tract at residues 1-21 is disordered; sequence MSGHSKWANIKHKKEKMDAKK.

Belongs to the TACO1 family.

The protein localises to the cytoplasm. The protein is Probable transcriptional regulatory protein Teth39_1009 of Thermoanaerobacter pseudethanolicus (strain ATCC 33223 / 39E) (Clostridium thermohydrosulfuricum).